The sequence spans 329 residues: Basic leucine zipper 61 (329 aa).

2 disordered regions span residues 1–22 (MAQL…FSSQ) and 98–204 (DDVH…HDPK). The segment covering 10-22 (TMTTPNWPDFSSQ) has biased composition (polar residues). The segment covering 119–133 (PTRSSSNTSTPSDHN) has biased composition (low complexity). The span at 139–154 (DNNKEAPPSDHDHHMD) shows a compositional bias: basic and acidic residues. The span at 155-169 (NNVANQNNAAGNNYN) shows a compositional bias: low complexity. The bZIP domain occupies 202 to 254 (DPKRVKRILANRQSAQRSRVRKLQYISELERSVTSLQTEVSVLSPRVAFLDHQ). Positions 204 to 223 (KRVKRILANRQSAQRSRVRK) are basic motif. The leucine-zipper stretch occupies residues 230 to 251 (LERSVTSLQTEVSVLSPRVAFL). Residues 304–313 (KMENNVSDQS) show a composition bias toward polar residues. Residues 304-329 (KMENNVSDQSPADIKPSVEKEQLLNV) form a disordered region. Over residues 319–329 (PSVEKEQLLNV) the composition is skewed to basic and acidic residues.

As to quaternary structure, forms heterodimers with BZIP18, BZIP43 and VIP1/BZIP51.

It is found in the nucleus. Its function is as follows. Transcriptional activator. This chain is Basic leucine zipper 61, found in Arabidopsis thaliana (Mouse-ear cress).